The following is a 420-amino-acid chain: Protein BDLF2 (420 aa).

Disordered regions lie at residues 1-21 and 64-129; these read MVDEQVAVEHGTVSHTISREE and AAAV…GGQR. Residues 1–184 are Intravirion-facing; it reads MVDEQVAVEH…AETLAEPPRC (184 aa). Residues 92–108 show a composition bias toward low complexity; the sequence is TNTQDQNQNQTTRARTN. A helical; Signal-anchor for type II membrane protein transmembrane segment spans residues 185-205; that stretch reads FMLSFVFIYYCCYLAFLALLA. The Virion surface portion of the chain corresponds to 206–420; sequence FGFNPLFLPS…LEEVMYVMVQ (215 aa). Asparagine 258, asparagine 264, asparagine 300, asparagine 304, asparagine 371, and asparagine 384 each carry an N-linked (GlcNAc...) asparagine; by host glycan.

It belongs to the herpesviridae BDLF2 family. In terms of assembly, interacts with BMRF2.

It is found in the virion membrane. Its function is as follows. Rearranges cellular actin to increase intercellular contacts and thereby promote virus cell-to-cell spreading. Induce the outgrowth of long, branched plasma membrane fronds to create intercellular network for virion traffic. The fronds are actin based and RhoA-dependent. The polypeptide is Protein BDLF2 (Epstein-Barr virus (strain GD1) (HHV-4)).